The following is a 36-amino-acid chain: MVEPLLAGIVLGLVPVTLAGLFVAAWQQYKRGEEVG.

A helical membrane pass occupies residues 5–25 (LLAGIVLGLVPVTLAGLFVAA).

Belongs to the PetG family. In terms of assembly, the 4 large subunits of the cytochrome b6-f complex are cytochrome b6, subunit IV (17 kDa polypeptide, PetD), cytochrome f and the Rieske protein, while the 4 small subunits are PetG, PetL, PetM and PetN. The complex functions as a dimer.

It is found in the cellular thylakoid membrane. Its function is as follows. Component of the cytochrome b6-f complex, which mediates electron transfer between photosystem II (PSII) and photosystem I (PSI), cyclic electron flow around PSI, and state transitions. PetG is required for either the stability or assembly of the cytochrome b6-f complex. In Acaryochloris marina (strain MBIC 11017), this protein is Cytochrome b6-f complex subunit 5.